The sequence spans 167 residues: UPF0102 protein RB9115 (167 aa).

This sequence belongs to the UPF0102 family.

This is UPF0102 protein RB9115 from Rhodopirellula baltica (strain DSM 10527 / NCIMB 13988 / SH1).